The following is a 464-amino-acid chain: MTEQKSKKLWGGRFSEAMAASVEKFSESISYDVRLYKYDIAGSKAHATMLSSQGIISPEELEQIIAGLSSIEADIEAGVFEFKTEYEDVHMNIEQALVDRIGAAGSRLHAARSRNDQIALDFKMYLRDQCDHLVELLDGACRAFTVVGRKYLGDIMPGYTHTQRAQPVLITHHMLAYYEMFRRDRDRILDCRKRLNLSPLGCAAMAGTGLPINREQVAKALGFAGVTANSMDTSADRDYAIELTSCLTMIQLHLSRLAEELVTWSTSEYKFVDISDSFCTGSSIMPQKKNPDIAELIRGKSGRVVGSLISLITMMKGLPLTYNRDQQEDKEPVFDAIDTVSASLSITAEMMAHMKFNTARCAEATETGFITATDLADYLVMKDVPFRQAHHIVGSAVAACIAKGCELPDLTLTEMQEFSPVIESDVFAVLTAEGSVNSRVSTGGTGLVRVTEALTLAEKCVGIA.

The protein belongs to the lyase 1 family. Argininosuccinate lyase subfamily.

Its subcellular location is the cytoplasm. The enzyme catalyses 2-(N(omega)-L-arginino)succinate = fumarate + L-arginine. It participates in amino-acid biosynthesis; L-arginine biosynthesis; L-arginine from L-ornithine and carbamoyl phosphate: step 3/3. The sequence is that of Argininosuccinate lyase from Desulfotalea psychrophila (strain LSv54 / DSM 12343).